A 305-amino-acid chain; its full sequence is Sulfate adenylyltransferase subunit 2 (305 aa).

This sequence belongs to the PAPS reductase family. CysD subfamily. In terms of assembly, heterodimer composed of CysD, the smaller subunit, and CysN.

It catalyses the reaction sulfate + ATP + H(+) = adenosine 5'-phosphosulfate + diphosphate. It functions in the pathway sulfur metabolism; hydrogen sulfide biosynthesis; sulfite from sulfate: step 1/3. With CysN forms the ATP sulfurylase (ATPS) that catalyzes the adenylation of sulfate producing adenosine 5'-phosphosulfate (APS) and diphosphate, the first enzymatic step in sulfur assimilation pathway. APS synthesis involves the formation of a high-energy phosphoric-sulfuric acid anhydride bond driven by GTP hydrolysis by CysN coupled to ATP hydrolysis by CysD. The polypeptide is Sulfate adenylyltransferase subunit 2 (Pseudomonas putida (strain ATCC 700007 / DSM 6899 / JCM 31910 / BCRC 17059 / LMG 24140 / F1)).